The following is a 191-amino-acid chain: UPF0398 protein LSEI_1479 (191 aa).

The protein belongs to the UPF0398 family.

This Lacticaseibacillus paracasei (strain ATCC 334 / BCRC 17002 / CCUG 31169 / CIP 107868 / KCTC 3260 / NRRL B-441) (Lactobacillus paracasei) protein is UPF0398 protein LSEI_1479.